A 1014-amino-acid polypeptide reads, in one-letter code: MPGKLKVKIVAGRHLPVMDRASDLTDAFVEVKFGNTTFKTDVYHKSLNPQWNSEWFKFEVDDEDLQDEPLQITVLDHDTYSANDAIGKVYIDIDPLLYTEAATVISGWFPIYDTIHGIRGEISVLVKVDLFNDLNRFRQSSCGVKFFCTTSIPKSYRAVVIHGFVEELVVNEDPEYQWIDRIRTPRASNEARQRLISLMSGELQRKIGLKVLEMRGNAVVGYLQCFDLEGESGLVVRAIGTACTLDKLSNPAPFAPSCNSPCKEIKEAPFIEELNPNTHSSGPSTPLKNQTYSFSPSKSFSRQSSSSDTDLSLTPKTGMGSGSAGRDGGAFKALLRQQTQSALEQREFPFFTLTSFPPTFLVHVGGVVSARSVKLLDRIHNPDEPETRDAWWAEIRQEIKSHARALGCHAVVGYSESTSICEEVCILSASGTAAVLNPKFLQEASAEGCLEQRSEETSPTPCAFCHIPYDELNMPFPANLTYCCACRKQKVPDVLFTTIDLPSDAPVIGKGCLIQARLCRLKKKSQAEANATVISSLLPFMEYELHTQLMNKLKLKGMNGLFGLRIQITVGESMLLGLASATGVYLSSLPTPGGIQIAGKTPSEGSYDQHISHMQKKINETIAKNKDLYEINPPEILEETVGSPIPEPRQRTRLLRSQSESSDEAAELDLSHGKKDAFVLEIDDTDAMEDVHSLLTDVAPPPGFYSCNTEIMPGINNWIPNIQMFSSVRVIRLNSTNLTNQTLNKNFNDLCENLLKSLYFKLRSMVPCCLCHVNFTVAVPEEESIQVAVTAVAITFDKQQALQVPKPRPEKPQPRGSDPEEQLQFPLELSSDSPGPSTFSPARDVPERGGSPAGATQRAVSLDKSSPLAESHLRHRGGGGGAIPSVTVVKMTPLSFIPGAKITKFLGIINMFFIRETTSLREEGGVSGFLHAFICEVFAMVRAHVAALGGNAVVSYIMKQCVFMENANKNQAQCLINVSGDAVIFISESEVEAGPGQPTAPGPQSAGVGGDSAT.

In terms of domain architecture, C2 spans 1–109 (MPGKLKVKIV…EAATVISGWF (109 aa)). Ca(2+) contacts are provided by Asp-19, Asp-26, Asp-76, Asp-78, Ser-81, and Asp-84. Disordered regions lie at residues 274-328 (LNPN…GRDG), 639-669 (ETVG…AELD), 801-878 (ALQV…HRGG), and 992-1014 (EAGP…DSAT). Residues 275 to 292 (NPNTHSSGPSTPLKNQTY) are compositionally biased toward polar residues. The segment covering 293 to 318 (SFSPSKSFSRQSSSSDTDLSLTPKTG) has biased composition (low complexity). Over residues 319-328 (MGSGSAGRDG) the composition is skewed to gly residues. Over residues 830–840 (SSDSPGPSTFS) the composition is skewed to polar residues. Residues 993–1006 (AGPGQPTAPGPQSA) show a composition bias toward low complexity.

It depends on Ca(2+) as a cofactor.

It is found in the cytoplasmic vesicle membrane. Its subcellular location is the cytoplasm. The protein resides in the cell cortex. The protein localises to the cell membrane. It localises to the cell projection. It is found in the ruffle. May be required for insulin-stimulated glucose transport and glucose transporter SLC2A4/GLUT4 translocation from intracellular glucose storage vesicle (GSV) to the plasma membrane (PM) in adipocytes. May bind phospholipid membranes in a calcium-dependent manner. The polypeptide is C2 domain-containing protein 5 (c2cd5) (Xenopus tropicalis (Western clawed frog)).